Consider the following 71-residue polypeptide: Prophage lysis protein S homolog EssQ (71 aa).

This sequence belongs to the lambda phage S protein family.

The polypeptide is Prophage lysis protein S homolog EssQ (essQ) (Escherichia coli (strain K12)).